A 148-amino-acid chain; its full sequence is Succinate dehydrogenase assembly factor 3, mitochondrial (148 aa).

The N-terminal 12 residues, 1-12 (MYALRPTLRRSA), are a transit peptide targeting the mitochondrion. The disordered stretch occupies residues 129–148 (RGTEGDLEDGDGGESGQKSQ).

Belongs to the complex I LYR family. SDHAF3 subfamily. Interacts with the iron-sulfur protein subunit within the SDH catalytic dimer.

The protein resides in the mitochondrion matrix. Functionally, plays an essential role in the assembly of succinate dehydrogenase (SDH), an enzyme complex (also referred to as respiratory complex II) that is a component of both the tricarboxylic acid (TCA) cycle and the mitochondrial electron transport chain, and which couples the oxidation of succinate to fumarate with the reduction of ubiquinone (coenzyme Q) to ubiquinol. Promotes maturation of the iron-sulfur protein subunit of the SDH catalytic dimer, protecting it from the deleterious effects of oxidants. May act together with SDHAF1. This Neurospora crassa (strain ATCC 24698 / 74-OR23-1A / CBS 708.71 / DSM 1257 / FGSC 987) protein is Succinate dehydrogenase assembly factor 3, mitochondrial.